The sequence spans 363 residues: Cytoskeleton protein RodZ (363 aa).

At 1 to 111 (MNTEASQDQT…LGKKHKKRDG (111 aa)) the chain is on the cytoplasmic side. Residues 19–79 (LRQARESLGL…KLVHLPEDEL (61 aa)) form the HTH cro/C1-type domain. A DNA-binding region (H-T-H motif) is located at residues 30-49 (QQTVAERLCLKVSTIRDIEE). Residues 112 to 132 (WLMSFTWLIVLVVLGLTGAWW) traverse the membrane as a helical; Signal-anchor for type II membrane protein segment. Residues 133–363 (WQNHQAQQAE…RVARLTVGVE (231 aa)) lie on the Periplasmic side of the membrane. The disordered stretch occupies residues 151–277 (SAQLSQNGGQ…PLPTADAGVS (127 aa)). Positions 188-199 (PLTNHSVSAITN) are enriched in polar residues. Residues 200 to 225 (SAPTTSSVPTTSSATTSSVPTTSSVP) show a composition bias toward low complexity. Residues 226-243 (KINSTEPVDTANTNTTMH) are compositionally biased toward polar residues. Residues 247 to 259 (AASAAVSPSQVPQ) are compositionally biased toward low complexity.

It belongs to the RodZ family.

It localises to the cell inner membrane. Its function is as follows. Cytoskeletal protein that is involved in cell-shape control through regulation of the length of the long axis. The protein is Cytoskeleton protein RodZ of Yersinia pseudotuberculosis serotype O:1b (strain IP 31758).